The following is a 373-amino-acid chain: MEGITSFENLPEELKREILLRMSPNSLVTCSRVSKKLASMIRTKSFKELYLSRSMRCPRVLFAANGTITPHVLFTSFQEKEKPLLSSGEQRIITSLQGEFLFSPPVRGLICLVERESARIVICNPGTTKFLALPIVEADETTRIITHLGYDEQKDVFKVLCTRTKPETPHLVLTVGSGKEPWREIVCKFPHTVIGAGVFYRGTLYYLAAFHSKSIIMTFDVRSETFMPITSPDGVDLNQGSWRLVNYSQQGGFALVNESRGFIYQSNGGDAYLETWVWNVDTRKWSMNSILIRKWKDYAQDNEDYDYRFRGTQGTYELVFAPIRVKEDGSLTVILYNTDTQAFRRSKVQMMGEGHEFRFVDTFLDHVDSTLLI.

The F-box domain maps to 4 to 49 (ITSFENLPEELKREILLRMSPNSLVTCSRVSKKLASMIRTKSFKEL).

This is Putative F-box protein At1g76830 from Arabidopsis thaliana (Mouse-ear cress).